The following is a 402-amino-acid chain: Type II NADH:quinone oxidoreductase (402 aa).

Residues 12-16, 39-40, and Val83 each bind FAD; these read GAGYA and NK. Residue Glu172 is part of the active site. FAD is bound by residues Asp302, 319-320, and Lys379; that span reads AQ.

Belongs to the NADH dehydrogenase family. FAD is required as a cofactor.

The protein resides in the cell membrane. The catalysed reaction is a quinone + NADH + H(+) = a quinol + NAD(+). In terms of biological role, alternative, nonproton pumping NADH:quinone oxidoreductase that delivers electrons to the respiratory chain by oxidation of NADH and reduction of quinones, and contributes to the regeneration of NAD(+). This chain is Type II NADH:quinone oxidoreductase, found in Staphylococcus epidermidis (strain ATCC 12228 / FDA PCI 1200).